Here is a 76-residue protein sequence, read N- to C-terminus: Small ribosomal subunit protein bS16 (76 aa).

Belongs to the bacterial ribosomal protein bS16 family.

This Helicobacter pylori (strain P12) protein is Small ribosomal subunit protein bS16.